We begin with the raw amino-acid sequence, 162 residues long: Cyclic pyranopterin monophosphate synthase (162 aa).

Substrate is bound by residues 75–77 (LCH) and 113–114 (ME). Aspartate 128 is a catalytic residue.

This sequence belongs to the MoaC family. As to quaternary structure, homohexamer; trimer of dimers.

The enzyme catalyses (8S)-3',8-cyclo-7,8-dihydroguanosine 5'-triphosphate = cyclic pyranopterin phosphate + diphosphate. Its pathway is cofactor biosynthesis; molybdopterin biosynthesis. Its function is as follows. Catalyzes the conversion of (8S)-3',8-cyclo-7,8-dihydroguanosine 5'-triphosphate to cyclic pyranopterin monophosphate (cPMP). In Klebsiella pneumoniae (strain 342), this protein is Cyclic pyranopterin monophosphate synthase.